Consider the following 354-residue polypeptide: Peptide chain release factor 1 (354 aa).

Gln230 carries the N5-methylglutamine modification.

Belongs to the prokaryotic/mitochondrial release factor family. Methylated by PrmC. Methylation increases the termination efficiency of RF1.

It localises to the cytoplasm. Its function is as follows. Peptide chain release factor 1 directs the termination of translation in response to the peptide chain termination codons UAG and UAA. This chain is Peptide chain release factor 1, found in Pelobacter propionicus (strain DSM 2379 / NBRC 103807 / OttBd1).